The primary structure comprises 247 residues: Carboxy-S-adenosyl-L-methionine synthase (247 aa).

Residues Tyr40, 65–67 (GAS), 90–91 (DN), 122–123 (DI), Asn137, and Arg204 each bind S-adenosyl-L-methionine.

Belongs to the class I-like SAM-binding methyltransferase superfamily. Cx-SAM synthase family. In terms of assembly, homodimer.

The enzyme catalyses prephenate + S-adenosyl-L-methionine = carboxy-S-adenosyl-L-methionine + 3-phenylpyruvate + H2O. In terms of biological role, catalyzes the conversion of S-adenosyl-L-methionine (SAM) to carboxy-S-adenosyl-L-methionine (Cx-SAM). In Pseudomonas putida (strain GB-1), this protein is Carboxy-S-adenosyl-L-methionine synthase.